The sequence spans 237 residues: MLDLTELEKSLGVKFENLSLLEQALIHTSWVNENPNHLSGSNERMEFLGDAVLGVIFADRLYHDFPDIQEGDLTRFRSLLVRRESLVRVALGINLGKYLYLGRGEDASKGRFKPANLAGAFEAVLAAIYLDKGIDATREVIFRLFKTEMERVQTLSSNIDYKSRLQELVQAQFQLTPRYRIIDFSGPEHNHLFIAEVYTEDKVLAEGSGRSKKEAETSAAKEALQQFENSFTAEDNI.

An RNase III domain is found at 4 to 133 (LTELEKSLGV…VLAAIYLDKG (130 aa)). A Mg(2+)-binding site is contributed by Glu-46. Active-site residues include Asp-50 and Glu-122. Glu-122 serves as a coordination point for Mg(2+). In terms of domain architecture, DRBM spans 160–229 (DYKSRLQELV…AKEALQQFEN (70 aa)).

The protein belongs to the ribonuclease III family. As to quaternary structure, homodimer. Mg(2+) is required as a cofactor.

The protein resides in the cytoplasm. The enzyme catalyses Endonucleolytic cleavage to 5'-phosphomonoester.. Functionally, digests double-stranded RNA. Involved in the processing of primary rRNA transcript to yield the immediate precursors to the large and small rRNAs (23S and 16S). Processes some mRNAs, and tRNAs when they are encoded in the rRNA operon. Processes pre-crRNA and tracrRNA of type II CRISPR loci if present in the organism. This Dehalococcoides mccartyi (strain ATCC BAA-2266 / KCTC 15142 / 195) (Dehalococcoides ethenogenes (strain 195)) protein is Ribonuclease 3.